A 132-amino-acid polypeptide reads, in one-letter code: MSMTDNVADMLTRIRNAYKSKLINVSFPSSKIKTSILDVLQKEGYIKDYITTQKNNISYTEVALKYSVNGDASICEIHRVSKPGKRVYSAIKDLKGYYNNMGIYILSTPYGVMSDREAHIKNVGGEVICKVF.

Belongs to the universal ribosomal protein uS8 family. Part of the 30S ribosomal subunit. Contacts proteins S5 and S12.

One of the primary rRNA binding proteins, it binds directly to 16S rRNA central domain where it helps coordinate assembly of the platform of the 30S subunit. The protein is Small ribosomal subunit protein uS8 of Rickettsia conorii (strain ATCC VR-613 / Malish 7).